Consider the following 77-residue polypeptide: Large ribosomal subunit protein eL14 (77 aa).

Belongs to the eukaryotic ribosomal protein eL14 family.

This is Large ribosomal subunit protein eL14 from Methanococcus maripaludis (strain C7 / ATCC BAA-1331).